The following is a 571-amino-acid chain: Kelch-like protein 28 (571 aa).

The 68-residue stretch at 35-102 folds into the BTB domain; the sequence is CDIILRVGDV…AYTGTVFISQ (68 aa). Kelch repeat units follow at residues 284 to 331, 332 to 386, 387 to 433, 435 to 479, 480 to 526, and 528 to 570; these read VLCA…VLDQ, KVFV…VLAG, EVFA…VLDG, LYAI…VMLG, FIFV…VIDN, and LYVV…GLTA.

The polypeptide is Kelch-like protein 28 (Klhl28) (Mus musculus (Mouse)).